The chain runs to 211 residues: Probable cytokinin riboside 5'-monophosphate phosphoribohydrolase LOGL3 (211 aa).

Residues E84, 102–103 (RK), 119–125 (GYGTLEE), and T131 contribute to the substrate site.

The protein belongs to the LOG family. As to expression, expressed in roots, leaves, stems, tiller buds, shoot apex, immature inflorescences and flowers.

It catalyses the reaction N(6)-(dimethylallyl)adenosine 5'-phosphate + H2O = N(6)-dimethylallyladenine + D-ribose 5-phosphate. The enzyme catalyses 9-ribosyl-trans-zeatin 5'-phosphate + H2O = trans-zeatin + D-ribose 5-phosphate. In terms of biological role, cytokinin-activating enzyme working in the direct activation pathway. Phosphoribohydrolase that converts inactive cytokinin nucleotides to the biologically active free-base forms. This is Probable cytokinin riboside 5'-monophosphate phosphoribohydrolase LOGL3 (LOGL3) from Oryza sativa subsp. japonica (Rice).